The following is a 172-amino-acid chain: Large ribosomal subunit protein uL10 (172 aa).

This sequence belongs to the universal ribosomal protein uL10 family. Part of the ribosomal stalk of the 50S ribosomal subunit. The N-terminus interacts with L11 and the large rRNA to form the base of the stalk. The C-terminus forms an elongated spine to which L12 dimers bind in a sequential fashion forming a multimeric L10(L12)X complex.

Forms part of the ribosomal stalk, playing a central role in the interaction of the ribosome with GTP-bound translation factors. This chain is Large ribosomal subunit protein uL10, found in Rhodospirillum centenum (strain ATCC 51521 / SW).